A 521-amino-acid polypeptide reads, in one-letter code: Vascular endothelial zinc finger 1 (521 aa).

A C2H2-type 1 zinc finger spans residues 74-96 (FVCTYCSKAFRDSYHLRRHESCH). The segment covering 140–155 (TTSSSGTNPSSSASTT) has biased composition (low complexity). A disordered region spans residues 140-167 (TTSSSGTNPSSSASTTAMPVTQSVKKPS). 5 consecutive C2H2-type zinc fingers follow at residues 174–196 (HACE…KLSH), 202–224 (FECP…VRSH), 232–255 (YTCS…KHVH), 261–283 (FKCQ…MVRH), and 287–308 (VSCN…LKTH). Lys362 carries the N6-acetyllysine modification. Tandem repeats lie at residues 394–400 (PVTLTTP), 445–451 (PVTITSP), 457–463 (PLTLTTP), and 479–485 (PVTITSP). The 4 X 7 AA repeats of P-[LV]-T-[IL]-T-[ST]-P stretch occupies residues 394–485 (PVTLTTPFSI…IAHPVTITSP (92 aa)).

It belongs to the krueppel C2H2-type zinc-finger protein family. Interacts with ARHGAP22. In terms of tissue distribution, ubiquitously expressed. Highest levels in skeletal muscle and kidney.

The protein localises to the nucleus. Possible transcription factor. Specifically binds to the CT/GC-rich region of the interleukin-3 promoter and mediates tax transactivation of IL-3. This is Vascular endothelial zinc finger 1 (VEZF1) from Homo sapiens (Human).